We begin with the raw amino-acid sequence, 323 residues long: 4-hydroxyphenylpyruvate 3-dimethylallyltransferase (323 aa).

2 residues coordinate substrate: arginine 160 and glutamate 281.

It belongs to the aromatic prenyltransferase family. As to quaternary structure, monomer.

The protein resides in the cytoplasm. The catalysed reaction is 3-(4-hydroxyphenyl)pyruvate + dimethylallyl diphosphate = 3-dimethylallyl-4-hydroxyphenylpyruvate + diphosphate. It functions in the pathway antibiotic biosynthesis; novobiocin biosynthesis. Its function is as follows. Magnesium-independent aromatic prenyltransferase that catalyzes the irreversible transfer of a dimethylallyl group to 4-hydroxyphenylpyruvate to produce the ring A structure in the novobiocin biosynthesis pathway. Novobiocin is an aminocoumarin family antibiotic that targets bacterial DNA gyrases. It is able to prenylate many different compounds, including the phenylpropanoids 4-coumarate and caffeate, the plant polyketide resveratrol, the (iso)flavonoid naringenin, apigenin, daidzein and genistein, and the dihydroxynaphthalenes 1,6-DHN and 2,7-DHN. This Streptomyces niveus (Streptomyces spheroides) protein is 4-hydroxyphenylpyruvate 3-dimethylallyltransferase.